Here is a 363-residue protein sequence, read N- to C-terminus: Flagellar P-ring protein (363 aa).

Residues 1-18 form the signal peptide; the sequence is MWKKVLIAIVFITSFSFA.

It belongs to the FlgI family. The basal body constitutes a major portion of the flagellar organelle and consists of four rings (L,P,S, and M) mounted on a central rod.

The protein resides in the periplasm. It is found in the bacterial flagellum basal body. Assembles around the rod to form the L-ring and probably protects the motor/basal body from shearing forces during rotation. This is Flagellar P-ring protein from Sulfurihydrogenibium sp. (strain YO3AOP1).